A 424-amino-acid chain; its full sequence is Tyrosine--tRNA ligase (424 aa).

Position 37 (Tyr-37) interacts with L-tyrosine. The short motif at 42–51 (PTADSLHLGH) is the 'HIGH' region element. An N6-acetyllysine modification is found at Lys-144. L-tyrosine-binding residues include Tyr-175 and Gln-179. The 'KMSKS' region motif lies at 235–239 (KFGKT). Lys-238 contacts ATP. One can recognise an S4 RNA-binding domain in the interval 357 to 414 (ADLMQALVDSELQPSRGQARKTIASNAITINGEKQSDPEYFFKEEDRLFGRFTLLRRG).

It belongs to the class-I aminoacyl-tRNA synthetase family. TyrS type 1 subfamily. As to quaternary structure, homodimer.

It localises to the cytoplasm. The catalysed reaction is tRNA(Tyr) + L-tyrosine + ATP = L-tyrosyl-tRNA(Tyr) + AMP + diphosphate + H(+). Its function is as follows. Catalyzes the attachment of tyrosine to tRNA(Tyr) in a two-step reaction: tyrosine is first activated by ATP to form Tyr-AMP and then transferred to the acceptor end of tRNA(Tyr). The protein is Tyrosine--tRNA ligase of Shigella boydii serotype 4 (strain Sb227).